The chain runs to 197 residues: MIVLGLTGSIGLGKSTTAKMFAEAGVPVHDSDEAVHRLYSGVAAPLVEAAFPGTVVDGVVDRAKLGARVLGDAAALKRLEAIIHPLVRADADAFLARHRTAGESIAVLDIPLLFETGGRGRVDKVVVVTAPAEVQRQRVLARPGMTEEKLAAILAKQVPDEEKRRLADFIIDTGQGLEAARAEVDAIIDELRGQRGS.

The DPCK domain occupies Val3–Ser197. Gly11–Thr16 contributes to the ATP binding site.

It belongs to the CoaE family.

Its subcellular location is the cytoplasm. The catalysed reaction is 3'-dephospho-CoA + ATP = ADP + CoA + H(+). The protein operates within cofactor biosynthesis; coenzyme A biosynthesis; CoA from (R)-pantothenate: step 5/5. In terms of biological role, catalyzes the phosphorylation of the 3'-hydroxyl group of dephosphocoenzyme A to form coenzyme A. The sequence is that of Dephospho-CoA kinase from Mesorhizobium japonicum (strain LMG 29417 / CECT 9101 / MAFF 303099) (Mesorhizobium loti (strain MAFF 303099)).